The sequence spans 315 residues: Methenyltetrahydromethanopterin cyclohydrolase (315 aa).

Belongs to the MCH family.

The protein localises to the cytoplasm. It catalyses the reaction 5,10-methenyl-5,6,7,8-tetrahydromethanopterin + H2O = N(5)-formyl-5,6,7,8-tetrahydromethanopterin + H(+). Its pathway is one-carbon metabolism; methanogenesis from CO(2); 5,10-methenyl-5,6,7,8-tetrahydromethanopterin from CO(2): step 3/3. Catalyzes the reversible interconversion of 5-formyl-H(4)MPT to methenyl-H(4)MPT(+). The chain is Methenyltetrahydromethanopterin cyclohydrolase from Methanospirillum hungatei JF-1 (strain ATCC 27890 / DSM 864 / NBRC 100397 / JF-1).